The sequence spans 92 residues: Small ribosomal subunit protein bS20 (92 aa).

It belongs to the bacterial ribosomal protein bS20 family.

In terms of biological role, binds directly to 16S ribosomal RNA. This Persephonella marina (strain DSM 14350 / EX-H1) protein is Small ribosomal subunit protein bS20.